A 636-amino-acid polypeptide reads, in one-letter code: Chaperone protein DnaK2 (636 aa).

The residue at position 198 (Thr-198) is a Phosphothreonine; by autocatalysis. The segment covering 604 to 618 (EAGVGAPGAGPEAGT) has biased composition (low complexity). Residues 604-636 (EAGVGAPGAGPEAGTSSGGGDDVIDAEFSEPEK) form a disordered region. Residues 625 to 636 (DVIDAEFSEPEK) are compositionally biased toward acidic residues.

The protein belongs to the heat shock protein 70 family.

Functionally, acts as a chaperone. This is Chaperone protein DnaK2 (dnaK2) from Synechocystis sp. (strain ATCC 27184 / PCC 6803 / Kazusa).